We begin with the raw amino-acid sequence, 1775 residues long: Protein TIC 214 (1775 aa).

6 helical membrane-spanning segments follow: residues 19 to 39 (IINS…FSIG), 68 to 88 (FIAG…HLAL), 91 to 111 (PHTI…WNNH), 133 to 153 (VFLN…SSML), 176 to 196 (VGWL…LVWI), and 227 to 247 (IFSI…PSPI). The segment at 1491-1512 (KESAGQGERESDNEKKKNLESA) is disordered.

It belongs to the TIC214 family. As to quaternary structure, part of the Tic complex.

It is found in the plastid. Its subcellular location is the chloroplast inner membrane. In terms of biological role, involved in protein precursor import into chloroplasts. May be part of an intermediate translocation complex acting as a protein-conducting channel at the inner envelope. This chain is Protein TIC 214, found in Lobularia maritima (Sweet alyssum).